A 72-amino-acid polypeptide reads, in one-letter code: UPF0352 protein swp_2271 (72 aa).

This sequence belongs to the UPF0352 family.

This is UPF0352 protein swp_2271 from Shewanella piezotolerans (strain WP3 / JCM 13877).